Here is a 215-residue protein sequence, read N- to C-terminus: Protein-L-isoaspartate O-methyltransferase (215 aa).

Ser-62 is a catalytic residue.

The protein belongs to the methyltransferase superfamily. L-isoaspartyl/D-aspartyl protein methyltransferase family.

Its subcellular location is the cytoplasm. It carries out the reaction [protein]-L-isoaspartate + S-adenosyl-L-methionine = [protein]-L-isoaspartate alpha-methyl ester + S-adenosyl-L-homocysteine. Catalyzes the methyl esterification of L-isoaspartyl residues in peptides and proteins that result from spontaneous decomposition of normal L-aspartyl and L-asparaginyl residues. It plays a role in the repair and/or degradation of damaged proteins. This is Protein-L-isoaspartate O-methyltransferase from Bradyrhizobium sp. (strain BTAi1 / ATCC BAA-1182).